A 429-amino-acid polypeptide reads, in one-letter code: G2/mitotic-specific cyclin-B1 (429 aa).

A compositionally biased stretch (polar residues) spans 1–14; the sequence is MALRVTRNTKLNTE. Disordered regions lie at residues 1 to 21 and 71 to 128; these read MALR…KVSM and TGKV…PMET. K73 is modified (N6-acetyllysine). Residues 92 to 106 show a composition bias toward acidic residues; it reads PEVELAEPEPEPEPV. S122 bears the Phosphoserine; by CDK1 mark. S124 bears the Phosphoserine mark. Phosphoserine; by PLK1 is present on S129. S143 carries the post-translational modification Phosphoserine. 2 interaction with CDK2 regions span residues 165-173 and 254-257; these read EYVKDIYAY and YEEM. A Phosphothreonine modification is found at T317.

This sequence belongs to the cyclin family. Cyclin AB subfamily. Interacts with the CDC2 protein kinase to form a serine/threonine kinase holoenzyme complex also known as maturation promoting factor (MPF). The cyclin subunit imparts substrate specificity to the complex. Binds HEI10. Interacts with catalytically active RALBP1 and CDC2 during mitosis to form an endocytotic complex during interphase. Interacts with CCNF; interaction is required for nuclear localization. Interacts with CDK5RAP3. Interacts with RFPL4A and UBE2A. Interacts with INCA1. Post-translationally, ubiquitinated by the SCF(NIPA) complex during interphase, leading to its destruction. Not ubiquitinated during G2/M phases. In terms of processing, phosphorylated by PLK1 at Ser-129 on centrosomes during prophase: phosphorylation by PLK1 does not cause nuclear import. Phosphorylation at Ser-143 was also reported to be mediated by PLK1 but Ser-129 seems to be the primary phosphorylation site.

The protein resides in the cytoplasm. Its subcellular location is the nucleus. It is found in the cytoskeleton. The protein localises to the microtubule organizing center. It localises to the centrosome. Its function is as follows. Essential for the control of the cell cycle at the G2/M (mitosis) transition. The protein is G2/mitotic-specific cyclin-B1 (CCNB1) of Cricetulus griseus (Chinese hamster).